The following is a 70-amino-acid chain: MPDQRQQERSRRKQGEPSPLPTPTRHDPPPSEQESPVRRMLRDLRERDPGQEAEEEAAQRRQQRREQSGE.

Composition is skewed to basic and acidic residues over residues 1–15 (MPDQRQQERSRRKQG) and 24–50 (TRHDPPPSEQESPVRRMLRDLRERDPG). The segment at 1–70 (MPDQRQQERS…RQQRREQSGE (70 aa)) is disordered. Glu70 participates in a covalent cross-link: Isoglutamyl lysine isopeptide (Glu-Lys) (interchain with K-? in acceptor proteins).

The protein belongs to the ubiquitin-like protein UBact family.

May function as a protein modifier covalently attached to lysine residues of substrate proteins. This may serve to target the modified proteins for degradation by proteasomes. This chain is Prokaryotic ubiquitin-like protein UBact, found in Terrybacteria sp. (strain RIFCSPHIGHO2_01_FULL_58_15).